We begin with the raw amino-acid sequence, 694 residues long: E3 ubiquitin-protein ligase SPL11 (694 aa).

Residues 1-12 show a composition bias toward acidic residues; the sequence is MAGDRAEEEEGE. Disordered stretches follow at residues 1-21 and 343-363; these read MAGDRAEEEEGEAPPPEARAA and NGMEPPKRSTQPNKPTPACSS. The U-box domain maps to 272–346; the sequence is TIPDEFRCPI…SQWCETNGME (75 aa). Residues 350–363 are compositionally biased toward polar residues; that stretch reads RSTQPNKPTPACSS. ARM repeat units lie at residues 398–438, 439–479, 480–520, 521–561, 562–602, and 603–650; these read NANN…NLSI, HEDN…SLSV, IDEY…NLCI, YQGN…ILSS, HPEG…HLCS, and GEHH…FLVQ. The span at 650–667 shows a compositional bias: low complexity; sequence QQQEEQESQSQASAQVPP. Residues 650-694 are disordered; sequence QQQEEQESQSQASAQVPPQATPEQVPENDIPEQLDSPASQYPMVV.

As to quaternary structure, interacts with SPIN1 (via N-terminus). In terms of tissue distribution, highly expressed in leaf, at intermediate levels in shoot and weakly in root.

The protein localises to the nucleus. It is found in the cytoplasm. It carries out the reaction S-ubiquitinyl-[E2 ubiquitin-conjugating enzyme]-L-cysteine + [acceptor protein]-L-lysine = [E2 ubiquitin-conjugating enzyme]-L-cysteine + N(6)-ubiquitinyl-[acceptor protein]-L-lysine.. The protein operates within protein modification; protein ubiquitination. Its function is as follows. E3 ubiquitin-protein ligase that negatively regulates programmed cell death and disease resistance. Participates in flowering time control by mediating ubiquitination and subsequent proteasomal degradation of SPIN1. The protein is E3 ubiquitin-protein ligase SPL11 (SPL11) of Oryza sativa subsp. japonica (Rice).